We begin with the raw amino-acid sequence, 473 residues long: Sulfate adenylyltransferase subunit 1 (473 aa).

A tr-type G domain is found at 19–238 (KTLLKFLTCG…IKIKNSISSE (220 aa)). Residues 28–35 (GSVDDGKS) are G1. 28 to 35 (GSVDDGKS) lines the GTP pocket. The G2 stretch occupies residues 86–90 (GITID). The segment at 107 to 110 (DTPG) is G3. GTP-binding positions include 107–111 (DTPGH) and 162–165 (NKMD). The segment at 162-165 (NKMD) is G4. The tract at residues 200–202 (SAL) is G5.

It belongs to the TRAFAC class translation factor GTPase superfamily. Classic translation factor GTPase family. CysN/NodQ subfamily. As to quaternary structure, heterodimer composed of CysD, the smaller subunit, and CysN.

It catalyses the reaction sulfate + ATP + H(+) = adenosine 5'-phosphosulfate + diphosphate. It functions in the pathway sulfur metabolism; hydrogen sulfide biosynthesis; sulfite from sulfate: step 1/3. With CysD forms the ATP sulfurylase (ATPS) that catalyzes the adenylation of sulfate producing adenosine 5'-phosphosulfate (APS) and diphosphate, the first enzymatic step in sulfur assimilation pathway. APS synthesis involves the formation of a high-energy phosphoric-sulfuric acid anhydride bond driven by GTP hydrolysis by CysN coupled to ATP hydrolysis by CysD. This is Sulfate adenylyltransferase subunit 1 from Buchnera aphidicola subsp. Acyrthosiphon pisum (strain APS) (Acyrthosiphon pisum symbiotic bacterium).